The primary structure comprises 212 residues: Proheparin-binding EGF-like growth factor (212 aa).

A signal peptide spans 1–18 (MDGRVVLIHALLTAVCSA). The Extracellular segment spans residues 19-167 (AVGKFGRDGP…PSTYDHTTAL (149 aa)). Residues 82–108 (SKPQGPVTPKKKGNGNKRRKGKGLGKK) form a disordered region. The span at 90 to 106 (PKKKGNGNKRRKGKGLG) shows a compositional bias: basic residues. Positions 108–148 (KRDPCLRKYKDFCIHGECKYIRELGAPSCICQPGYHGERCH) constitute an EGF-like domain. Cystine bridges form between C112–C125, C120–C136, and C138–C147. Residues 153–212 (PVEHPPSTYDHTTALAVVAVVLSSLCLVIITALLMFRCHKRGVYDVENEEKIKLGITVNH) constitute a propeptide, C-terminal. The chain crosses the membrane as a helical span at residues 168 to 188 (AVVAVVLSSLCLVIITALLMF). Residues 189 to 212 (RCHKRGVYDVENEEKIKLGITVNH) lie on the Cytoplasmic side of the membrane.

As to quaternary structure, interacts with CNIH2.

The protein resides in the secreted. It localises to the extracellular space. Its subcellular location is the cell membrane. In terms of biological role, may be involved in macrophage-mediated cellular proliferation. It is mitogenic for fibroblasts and smooth muscle but not endothelial cells. It is able to bind EGF receptor/EGFR with higher affinity than EGF itself and is a far more potent mitogen for smooth muscle cells than EGF. Plays an important role in the proper development of cranial nerves by inhibiting the migration of the cranial neural crest cells (NCCs) into the odd-numbered neuromeres (r3 and r5) of the hindbrain Plays a role in mediating v-Jun-induced oncogenic transformation. The chain is Proheparin-binding EGF-like growth factor (HBEGF) from Gallus gallus (Chicken).